Reading from the N-terminus, the 351-residue chain is Peptide chain release factor 1 (351 aa).

At Q233 the chain carries N5-methylglutamine.

This sequence belongs to the prokaryotic/mitochondrial release factor family. Post-translationally, methylated by PrmC. Methylation increases the termination efficiency of RF1.

It localises to the cytoplasm. Functionally, peptide chain release factor 1 directs the termination of translation in response to the peptide chain termination codons UAG and UAA. This chain is Peptide chain release factor 1, found in Treponema pallidum subsp. pallidum (strain SS14).